A 58-amino-acid chain; its full sequence is Large ribosomal subunit protein bL32 (58 aa).

The protein belongs to the bacterial ribosomal protein bL32 family.

The sequence is that of Large ribosomal subunit protein bL32 from Carboxydothermus hydrogenoformans (strain ATCC BAA-161 / DSM 6008 / Z-2901).